The primary structure comprises 325 residues: Phosphate acyltransferase (325 aa).

The protein belongs to the PlsX family. In terms of assembly, homodimer. Probably interacts with PlsY.

It is found in the cytoplasm. The enzyme catalyses a fatty acyl-[ACP] + phosphate = an acyl phosphate + holo-[ACP]. It functions in the pathway lipid metabolism; phospholipid metabolism. Catalyzes the reversible formation of acyl-phosphate (acyl-PO(4)) from acyl-[acyl-carrier-protein] (acyl-ACP). This enzyme utilizes acyl-ACP as fatty acyl donor, but not acyl-CoA. In Mycoplasmopsis pulmonis (strain UAB CTIP) (Mycoplasma pulmonis), this protein is Phosphate acyltransferase.